Here is a 172-residue protein sequence, read N- to C-terminus: Odorant-binding protein (172 aa).

An N-terminal signal peptide occupies residues 1–15 (MVKFLLIVLALGVSC). Intrachain disulfides connect Cys60–Cys64 and Cys79–Cys170.

The protein belongs to the calycin superfamily. Lipocalin family. As to quaternary structure, homodimer.

It is found in the secreted. In terms of biological role, this protein is found in nasal epithelium and it binds a wide variety of chemical odorants. This is Odorant-binding protein (Obp1f) from Rattus norvegicus (Rat).